Here is a 211-residue protein sequence, read N- to C-terminus: Peptide methionine sulfoxide reductase MsrA (211 aa).

Cysteine 52 is an active-site residue.

Belongs to the MsrA Met sulfoxide reductase family.

The enzyme catalyses L-methionyl-[protein] + [thioredoxin]-disulfide + H2O = L-methionyl-(S)-S-oxide-[protein] + [thioredoxin]-dithiol. The catalysed reaction is [thioredoxin]-disulfide + L-methionine + H2O = L-methionine (S)-S-oxide + [thioredoxin]-dithiol. Functionally, has an important function as a repair enzyme for proteins that have been inactivated by oxidation. Catalyzes the reversible oxidation-reduction of methionine sulfoxide in proteins to methionine. The sequence is that of Peptide methionine sulfoxide reductase MsrA from Klebsiella pneumoniae (strain 342).